We begin with the raw amino-acid sequence, 201 residues long: Putative ferritin heavy polypeptide-like 19 (201 aa).

The 123-residue stretch at 1–123 folds into the Ferritin-like diiron domain; sequence MAFYFDQDDA…GYLSNLHKMG (123 aa).

Belongs to the ferritin family.

The sequence is that of Putative ferritin heavy polypeptide-like 19 (FTH1P19) from Homo sapiens (Human).